Reading from the N-terminus, the 356-residue chain is L-lactate dehydrogenase A (356 aa).

Residues D75–K80 and R121 contribute to the NAD(+) site. Residues R128, N160, and R191 each coordinate substrate. N160 contacts NAD(+). The active-site Proton acceptor is H215. T270 lines the substrate pocket.

This sequence belongs to the LDH/MDH superfamily. LDH family. Tetramer that arise from random association of LDH-A and LDH-B.

The catalysed reaction is (S)-lactate + NAD(+) = pyruvate + NADH + H(+). It participates in fermentation; pyruvate fermentation to lactate; (S)-lactate from pyruvate: step 1/1. This chain is L-lactate dehydrogenase A, found in Hordeum vulgare (Barley).